Here is an 89-residue protein sequence, read N- to C-terminus: Small ribosomal subunit protein uS15 (89 aa).

The protein belongs to the universal ribosomal protein uS15 family. In terms of assembly, part of the 30S ribosomal subunit. Forms a bridge to the 50S subunit in the 70S ribosome, contacting the 23S rRNA.

Functionally, one of the primary rRNA binding proteins, it binds directly to 16S rRNA where it helps nucleate assembly of the platform of the 30S subunit by binding and bridging several RNA helices of the 16S rRNA. Forms an intersubunit bridge (bridge B4) with the 23S rRNA of the 50S subunit in the ribosome. This Brucella abortus (strain S19) protein is Small ribosomal subunit protein uS15.